Reading from the N-terminus, the 263-residue chain is MKNAFKDTLKAGRPQIGLWLGLANSYSAELLAGAGFDWLLIDGEHAPNNVQTVLTQLQAIAPYPSQPVVRPSWNDPVQIKQLLDVGAQTLLIPMVQNADEARNAVAATRYPPAGIRGVGSALARASRWNRIPDYLHQANDAMCVLVQIETREAMSNLASILDVDGIDGVFIGPADLSADMGFAGNPQHPEVQAAIENAIVQIRAAGKAPGILMANEPLAKRYLELGALFVAVGVDTTLLARGAEALAARFGVEKNLSGASGVY.

H45 acts as the Proton acceptor in catalysis. A substrate-binding site is contributed by Q147. E149 serves as a coordination point for a divalent metal cation. Residues A174 and D175 each contribute to the substrate site. D175 contacts a divalent metal cation.

This sequence belongs to the HpcH/HpaI aldolase family. In terms of assembly, homohexamer; trimer of dimers. Requires a divalent metal cation as cofactor.

The enzyme catalyses 4-hydroxy-2-oxoheptanedioate = succinate semialdehyde + pyruvate. It participates in aromatic compound metabolism; 4-hydroxyphenylacetate degradation; pyruvate and succinate semialdehyde from 4-hydroxyphenylacetate: step 7/7. In terms of biological role, catalyzes the reversible retro-aldol cleavage of 4-hydroxy-2-ketoheptane-1,7-dioate (HKHD) to pyruvate and succinic semialdehyde. The chain is 4-hydroxy-2-oxo-heptane-1,7-dioate aldolase from Salmonella choleraesuis (strain SC-B67).